A 237-amino-acid polypeptide reads, in one-letter code: Probable 2-phosphosulfolactate phosphatase (237 aa).

Belongs to the ComB family. It depends on Mg(2+) as a cofactor.

It catalyses the reaction (2R)-O-phospho-3-sulfolactate + H2O = (2R)-3-sulfolactate + phosphate. This chain is Probable 2-phosphosulfolactate phosphatase, found in Thermus thermophilus (strain ATCC 27634 / DSM 579 / HB8).